The primary structure comprises 154 residues: Cytochrome c-type biogenesis protein CcmE (154 aa).

Residues 1 to 8 (MHPQRKQR) are Cytoplasmic-facing. Residues 9–29 (LMIVLFIVVFSSLAVGLIAYA) form a helical; Signal-anchor for type II membrane protein membrane-spanning segment. Topologically, residues 30 to 154 (LRENINLFYP…ATCGGLNYGA (125 aa)) are periplasmic. Residues His-124 and Tyr-128 each contribute to the heme site.

The protein belongs to the CcmE/CycJ family.

Its subcellular location is the cell inner membrane. Functionally, heme chaperone required for the biogenesis of c-type cytochromes. Transiently binds heme delivered by CcmC and transfers the heme to apo-cytochromes in a process facilitated by CcmF and CcmH. This Cellvibrio japonicus (strain Ueda107) (Pseudomonas fluorescens subsp. cellulosa) protein is Cytochrome c-type biogenesis protein CcmE.